The following is a 291-amino-acid chain: 33 kDa chaperonin (291 aa).

2 cysteine pairs are disulfide-bonded: Cys229–Cys231 and Cys262–Cys265.

This sequence belongs to the HSP33 family. Under oxidizing conditions two disulfide bonds are formed involving the reactive cysteines. Under reducing conditions zinc is bound to the reactive cysteines and the protein is inactive.

It is found in the cytoplasm. Its function is as follows. Redox regulated molecular chaperone. Protects both thermally unfolding and oxidatively damaged proteins from irreversible aggregation. Plays an important role in the bacterial defense system toward oxidative stress. The protein is 33 kDa chaperonin of Aliivibrio salmonicida (strain LFI1238) (Vibrio salmonicida (strain LFI1238)).